The following is a 271-amino-acid chain: Probable ribosomal RNA small subunit methyltransferase A (271 aa).

S-adenosyl-L-methionine-binding residues include Leu-12, Gly-37, Glu-58, Asp-83, and Asn-100.

This sequence belongs to the class I-like SAM-binding methyltransferase superfamily. rRNA adenine N(6)-methyltransferase family. RsmA subfamily.

It localises to the cytoplasm. Specifically dimethylates two adjacent adenosines in the loop of a conserved hairpin near the 3'-end of 16S rRNA in the 30S particle. May play a critical role in biogenesis of 30S subunits. The protein is Probable ribosomal RNA small subunit methyltransferase A of Methanococcus aeolicus (strain ATCC BAA-1280 / DSM 17508 / OCM 812 / Nankai-3).